The primary structure comprises 307 residues: N-acetylneuraminate lyase (307 aa).

Aceneuramate-binding residues include Thr-51 and Thr-52. Tyr-143 acts as the Proton donor in catalysis. Catalysis depends on Lys-173, which acts as the Schiff-base intermediate with substrate. Positions 175, 199, 201, 202, and 218 each coordinate aceneuramate.

The protein belongs to the DapA family. NanA subfamily. As to quaternary structure, homotetramer.

It localises to the cytoplasm. The catalysed reaction is aceneuramate = aldehydo-N-acetyl-D-mannosamine + pyruvate. It functions in the pathway amino-sugar metabolism; N-acetylneuraminate degradation. Functionally, catalyzes the cleavage of N-acetylneuraminic acid (sialic acid) to form pyruvate and N-acetylmannosamine via a Schiff base intermediate. It prevents sialic acids from being recycled and returning to the cell surface. Involved in the N-glycolylneuraminic acid (Neu5Gc) degradation pathway. In Danio rerio (Zebrafish), this protein is N-acetylneuraminate lyase.